Here is a 475-residue protein sequence, read N- to C-terminus: Aspartic proteinase 39 (475 aa).

Residues Met1–Ala23 form the signal peptide. The region spanning Tyr74–Ala422 is the Peptidase A1 domain. The active site involves Asp92. N-linked (GlcNAc...) asparagine glycosylation is found at Asn124 and Asn222. Asp303 is an active-site residue. N-linked (GlcNAc...) asparagine glycosylation is found at Asn425 and Asn446. Residue Ser449 is the site of GPI-anchor amidated serine attachment. Positions Ala450–Ala475 are cleaved as a propeptide — removed in mature form.

It belongs to the peptidase A1 family. In terms of tissue distribution, highly expressed in pollen and pollen tubes. Mostly expressed in inflorescence, flowers and siliques, and barely in leaves and seedlings.

The protein localises to the cell membrane. It is found in the cytoplasm. Its subcellular location is the cytosol. Displays aspartic proteolytic activity. Together with A36, contributes to pollen and ovule development, including the apical cell wall constitution of the growing pollen tubes. The protein is Aspartic proteinase 39 of Arabidopsis thaliana (Mouse-ear cress).